The sequence spans 523 residues: Keratin, type II cytoskeletal 71 (523 aa).

The head stretch occupies residues 1–129; sequence MSRQFTCKSG…DPEIQKVRAQ (129 aa). The segment at 130–165 is coil 1A; sequence EREQIKALNNKFASFIDKVRFLEQQNQVLETKWELL. The 314-residue stretch at 130-443 folds into the IF rod domain; that stretch reads EREQIKALNN…KLLESEECRM (314 aa). The segment at 166–184 is linker 1; that stretch reads QQLDLNNCKNNLEPILEGY. Residues 185-276 are coil 1B; it reads ISNLRKQLET…CLFEAEITQI (92 aa). Positions 277–300 are linker 12; that stretch reads QSHISDMSVILSMDNNRNLDLDSI. The tract at residues 301-439 is coil 2; the sequence is IDEVRTQYEE…ATYRKLLESE (139 aa). The tract at residues 440–523 is tail; that stretch reads ECRMSGEFPS…LSAPSKKTSR (84 aa). The segment at 492-523 is disordered; the sequence is GGEGRSRGSANDYKDTLGKGSSLSAPSKKTSR. Over residues 493–508 the composition is skewed to basic and acidic residues; that stretch reads GEGRSRGSANDYKDTL. The segment covering 510 to 523 has biased composition (polar residues); that stretch reads KGSSLSAPSKKTSR.

The protein belongs to the intermediate filament family. As to quaternary structure, heterodimer of a type I and a type II keratin. Associates with KRT16 and/or KRT17. In terms of tissue distribution, highly expressed in hair follicles from scalp. Specifically expressed in the inner root sheath (IRS) of the hair follicle. Present in the all 3 IRS layers: the cuticle, the Henle and the Huxley layers. Also detected in the pseudopods of specialized Huxley cells, termed Fluegelzellen, along the area of differentiated Henle cells (at protein level).

The protein localises to the cytoplasm. It is found in the cytoskeleton. In terms of biological role, plays a central role in hair formation. Essential component of keratin intermediate filaments in the inner root sheath (IRS) of the hair follicle. The sequence is that of Keratin, type II cytoskeletal 71 (KRT71) from Homo sapiens (Human).